The sequence spans 474 residues: Coronin-1C (474 aa).

WD repeat units follow at residues 78 to 118, 128 to 168, 172 to 202, 215 to 249, and 263 to 303; these read GHTG…LTLS, GHSK…ALIN, MHSD…RVID, AHEG…ALWN, and DTSN…PYVH. A coiled-coil region spans residues 435-474; that stretch reads VQNEAKLDEILKEIKSIKETICSQDERISKLEQQLAKMAA. Lysine 446 carries the post-translational modification N6-acetyllysine.

It belongs to the WD repeat coronin family. Homotrimer. Binds F-actin. Interacts with RCC2. Interacts preferentially with nucleotide-free and GDP-bound RAC1. Interacts with VIM (via head domain). Interacts with MICAL2; this interaction recruits MICAL2 to the actin filaments. In terms of tissue distribution, detected in skeletal muscle (at protein level). Detected in fibroblasts (at protein level). Ubiquitous.

It localises to the cell membrane. Its subcellular location is the cell projection. The protein localises to the lamellipodium. It is found in the ruffle membrane. The protein resides in the cytoplasm. It localises to the cytoskeleton. Its subcellular location is the cell cortex. The protein localises to the endosome membrane. In terms of biological role, plays a role in directed cell migration by regulating the activation and subcellular location of RAC1. Increases the presence of activated RAC1 at the leading edge of migrating cells. Required for normal organization of the cytoskeleton, including the actin cytoskeleton, microtubules and the vimentin intermediate filaments. Required for normal cell proliferation, cell migration, and normal formation of lamellipodia. Plays a role in endoplasmic reticulum-associated endosome fission: localizes to endosome membrane tubules and promotes recruitment of TMCC1, leading to recruitment of the endoplasmic reticulum to endosome tubules for fission. Endosome membrane fission of early and late endosomes is essential to separate regions destined for lysosomal degradation from carriers to be recycled to the plasma membrane. Required for normal distribution of mitochondria within cells. In Mus musculus (Mouse), this protein is Coronin-1C (Coro1c).